A 362-amino-acid polypeptide reads, in one-letter code: Sterol-4-alpha-carboxylate 3-dehydrogenase, decarboxylating (362 aa).

Met1 is subject to N-acetylmethionine. The Proton acceptor role is filled by Tyr161. Lys165 serves as a coordination point for NAD(+). A helical membrane pass occupies residues 287 to 307; sequence WMAYYLAFLLSLLVMVVSPLI. The Prevents secretion from ER motif lies at 359 to 362; the sequence is RKDK.

The protein belongs to the 3-beta-HSD family. As to quaternary structure, homodimer.

The protein resides in the endoplasmic reticulum membrane. Its subcellular location is the lipid droplet. It catalyses the reaction a 3beta-hydroxysteroid-4alpha-carboxylate + NADP(+) = a 3-oxosteroid + CO2 + NADPH. The catalysed reaction is a 3beta-hydroxysteroid-4alpha-carboxylate + NAD(+) = a 3-oxosteroid + CO2 + NADH. It carries out the reaction 4alpha-carboxyzymosterol + NADP(+) = zymosterone + CO2 + NADPH. The enzyme catalyses 4alpha-carboxy-4beta-methyl-5alpha-cholest-8-en-3beta-ol + NADP(+) = 4alpha-methyl-5alpha-cholest-8-en-3-one + CO2 + NADPH. It catalyses the reaction 4alpha-carboxy-5alpha-cholest-8-ene-3beta-ol + NADP(+) = 5alpha-cholest-8-en-3-one + CO2 + NADPH. The catalysed reaction is 4beta-methylzymosterol-4alpha-carboxylate + NADP(+) = 3-dehydro-4-methylzymosterol + CO2 + NADPH. It carries out the reaction 4beta-methylzymosterol-4alpha-carboxylate + NAD(+) = 3-dehydro-4-methylzymosterol + CO2 + NADH. The enzyme catalyses 4alpha-carboxy-5alpha-cholest-8-ene-3beta-ol + NAD(+) = 5alpha-cholest-8-en-3-one + CO2 + NADH. It catalyses the reaction 4alpha-carboxy-4beta-methyl-5alpha-cholest-8-en-3beta-ol + NAD(+) = 4alpha-methyl-5alpha-cholest-8-en-3-one + CO2 + NADH. The catalysed reaction is 4alpha-carboxyzymosterol + NAD(+) = zymosterone + CO2 + NADH. Its pathway is steroid biosynthesis; zymosterol biosynthesis; zymosterol from lanosterol: step 4/6. Catalyzes the NAD(P)(+)-dependent oxidative decarboxylation of the C4 methyl groups of 4-alpha-carboxysterols in post-squalene cholesterol biosynthesis. Plays a role in the regulation of the endocytic trafficking of EGFR. This is Sterol-4-alpha-carboxylate 3-dehydrogenase, decarboxylating (Nsdhl) from Mus musculus (Mouse).